Reading from the N-terminus, the 349-residue chain is Twinfilin-2 (349 aa).

Alanine 2 is modified (N-acetylalanine). ADF-H domains lie at 4-139 and 177-313; these read QTGI…KHLS and GLAF…DEVH. An N6-acetyllysine modification is found at lysine 14. Tyrosine 309 bears the Phosphotyrosine mark. The segment at 322–349 is disordered; the sequence is AFAKPKGPGGKRGHKRLIRGPGENGDDS. The segment covering 330 to 339 has biased composition (basic residues); that stretch reads GGKRGHKRLI. Phosphoserine is present on serine 349.

It belongs to the actin-binding proteins ADF family. Twinfilin subfamily. Interacts with G-actin; ADP-actin form and capping protein (CP). May also be able to interact with TWF1 and phosphoinositides, PI(4,5)P2. When bound to PI(4,5)P2, it is down-regulated. Interacts with MYO7A. In vitro, phosphorylated by PRKCZ, CK2 and SRC. In terms of tissue distribution, ubiquitously expressed (at protein level).

It is found in the cytoplasm. Its subcellular location is the cytoskeleton. The protein resides in the perinuclear region. It localises to the cell projection. The protein localises to the stereocilium. Functionally, actin-binding protein involved in motile and morphological processes. Inhibits actin polymerization, likely by sequestering G-actin. By capping the barbed ends of filaments, it also regulates motility. Seems to play an important role in clathrin-mediated endocytosis and distribution of endocytic organelles. May play a role in regulating the mature length of the middle and short rows of stereocilia. The chain is Twinfilin-2 (TWF2) from Homo sapiens (Human).